Here is a 167-residue protein sequence, read N- to C-terminus: Sporulation membrane protein YtrI (167 aa).

A helical transmembrane segment spans residues 15-35 (FFAGMMCGAVISWFFFLFTYG).

Its subcellular location is the cell membrane. Functionally, involved in sporulation. In Bacillus subtilis (strain 168), this protein is Sporulation membrane protein YtrI (ytrI).